The following is a 272-amino-acid chain: Shikimate dehydrogenase (NADP(+)) (272 aa).

Residues 14–16 (SKS) and T61 each bind shikimate. K65 functions as the Proton acceptor in the catalytic mechanism. E77 lines the NADP(+) pocket. Residues N86 and D102 each contribute to the shikimate site. NADP(+)-binding positions include 126–130 (GAGGA), 149–154 (NRTASR), and M213. Position 215 (Y215) interacts with shikimate. Position 237 (G237) interacts with NADP(+).

It belongs to the shikimate dehydrogenase family. Homodimer.

The enzyme catalyses shikimate + NADP(+) = 3-dehydroshikimate + NADPH + H(+). The protein operates within metabolic intermediate biosynthesis; chorismate biosynthesis; chorismate from D-erythrose 4-phosphate and phosphoenolpyruvate: step 4/7. In terms of biological role, involved in the biosynthesis of the chorismate, which leads to the biosynthesis of aromatic amino acids. Catalyzes the reversible NADPH linked reduction of 3-dehydroshikimate (DHSA) to yield shikimate (SA). This is Shikimate dehydrogenase (NADP(+)) from Salmonella typhimurium (strain LT2 / SGSC1412 / ATCC 700720).